We begin with the raw amino-acid sequence, 246 residues long: Zinc import ATP-binding protein ZnuC (246 aa).

One can recognise an ABC transporter domain in the interval 24–244 (LKIENLALAY…TLGEIFSSYI (221 aa)). Residue 56-63 (GPNGGGKT) coordinates ATP.

It belongs to the ABC transporter superfamily. Zinc importer (TC 3.A.1.15.5) family. In terms of assembly, the complex is composed of two ATP-binding proteins (ZnuC), two transmembrane proteins (ZnuB) and a solute-binding protein (ZnuA).

It localises to the cell membrane. The catalysed reaction is Zn(2+)(out) + ATP(in) + H2O(in) = Zn(2+)(in) + ADP(in) + phosphate(in) + H(+)(in). Part of the ABC transporter complex ZnuABC involved in zinc import. Responsible for energy coupling to the transport system. The protein is Zinc import ATP-binding protein ZnuC of Wolbachia sp. subsp. Brugia malayi (strain TRS).